We begin with the raw amino-acid sequence, 692 residues long: Highly divergent homeobox (692 aa).

Residues 3 to 63 constitute a DNA-binding region (homeobox 1); it reads LRSVFTVEQQ…NKRRKMSSKS (61 aa). Residues 117–133 show a composition bias toward polar residues; it reads SSSSKQGTTKHTNTQIT. The tract at residues 117–136 is disordered; it reads SSSSKQGTTKHTNTQITEAH. Residues K137, K142, K146, K165, K174, K196, K214, K223, and K234 each participate in a glycyl lysine isopeptide (Lys-Gly) (interchain with G-Cter in SUMO2) cross-link. A DNA-binding region (homeobox 2) is located at residues 437–500; the sequence is ALQDRTQFSD…NRRRKYRLMG (64 aa). 2 disordered regions span residues 505-541 and 647-692; these read PPRG…DNDR and KDQQ…SDSL. Positions 676 to 692 are enriched in polar residues; it reads TSLSVSSLSEKNASDSL.

The protein resides in the nucleus. The protein is Highly divergent homeobox (Hdx) of Mus musculus (Mouse).